A 113-amino-acid chain; its full sequence is Flagellar hook-basal body complex protein FliE (113 aa).

The protein belongs to the FliE family.

The protein localises to the bacterial flagellum basal body. This is Flagellar hook-basal body complex protein FliE from Rhizobium etli (strain CIAT 652).